A 505-amino-acid chain; its full sequence is Lysine--tRNA ligase (505 aa).

Mg(2+)-binding residues include glutamate 415 and glutamate 422.

The protein belongs to the class-II aminoacyl-tRNA synthetase family. Homodimer. Mg(2+) serves as cofactor.

It localises to the cytoplasm. It catalyses the reaction tRNA(Lys) + L-lysine + ATP = L-lysyl-tRNA(Lys) + AMP + diphosphate. This Escherichia coli (strain K12) protein is Lysine--tRNA ligase (lysS).